A 378-amino-acid chain; its full sequence is MSKKDYYEVLGLQKGASEQEIKRAYKRLAAKHHPDKNQGSKEAEEKFKEIKEAYEVLGDNEKRAMYDQYGHQAFEHGGGAGGFGGFGGGGFGGFEDIFSEMFGGGFGGGARRQRVVRGDDLRYDLEITLEEAVRGVKKDIRIRTLVQCDTCHGSGAEAGSKVETCPHCHGSGRVRRQQGFFMTETVCPSCHGTGKKIDKPCKSCHGDGRVEKTKNLSVTIPAGVDTGNQLRLSGEGAAGENGAPAGDLYVVIHVKDHDIFVRDGSNLYCEVPISFTMAALGGEIEVPTLDGRVKLKIPAETQTGKLFRVRGKGVTSARGGYAGDLICKVIIETPVSLNEEQKELLRKLEESLEGKGQHRPKHEGFFKGVKNFFDNLSK.

The 66-residue stretch at 5 to 70 folds into the J domain; that stretch reads DYYEVLGLQK…EKRAMYDQYG (66 aa). The CR-type zinc finger occupies 135–213; sequence GVKKDIRIRT…CHGDGRVEKT (79 aa). Zn(2+)-binding residues include Cys148, Cys151, Cys165, Cys168, Cys187, Cys190, Cys201, and Cys204. CXXCXGXG motif repeat units follow at residues 148–155, 165–172, 187–194, and 201–208; these read CDTCHGSG, CPHCHGSG, CPSCHGTG, and CKSCHGDG.

Belongs to the DnaJ family. In terms of assembly, homodimer. It depends on Zn(2+) as a cofactor.

It localises to the cytoplasm. Functionally, participates actively in the response to hyperosmotic and heat shock by preventing the aggregation of stress-denatured proteins and by disaggregating proteins, also in an autonomous, DnaK-independent fashion. Unfolded proteins bind initially to DnaJ; upon interaction with the DnaJ-bound protein, DnaK hydrolyzes its bound ATP, resulting in the formation of a stable complex. GrpE releases ADP from DnaK; ATP binding to DnaK triggers the release of the substrate protein, thus completing the reaction cycle. Several rounds of ATP-dependent interactions between DnaJ, DnaK and GrpE are required for fully efficient folding. Also involved, together with DnaK and GrpE, in the DNA replication of plasmids through activation of initiation proteins. The sequence is that of Chaperone protein DnaJ from Glaesserella parasuis serovar 5 (strain SH0165) (Haemophilus parasuis).